The primary structure comprises 418 residues: AP-3 complex subunit mu-1 (418 aa).

The region spanning 176-417 (NNEAYFDVVE…VTKAGKFQVR (242 aa)) is the MHD domain.

Belongs to the adaptor complexes medium subunit family. Adaptor protein complex 3 (AP-3) is a heterotetramer composed of two large adaptins (delta-type subunit AP3D1 and beta-type subunit AP3B1 or AP3B2), a medium adaptin (mu-type subunit AP3M1 or AP3M2) and a small adaptin (sigma-type subunit APS1 or AP3S2). Interacts with AGAP1. AP-3 associates with the BLOC-1 complex.

It localises to the golgi apparatus. The protein resides in the cytoplasmic vesicle membrane. Its function is as follows. Part of the AP-3 complex, an adaptor-related complex which is not clathrin-associated. The complex is associated with the Golgi region as well as more peripheral structures. It facilitates the budding of vesicles from the Golgi membrane and may be directly involved in trafficking to lysosomes. In concert with the BLOC-1 complex, AP-3 is required to target cargos into vesicles assembled at cell bodies for delivery into neurites and nerve terminals. The chain is AP-3 complex subunit mu-1 (AP3M1) from Bos taurus (Bovine).